We begin with the raw amino-acid sequence, 502 residues long: Cytochrome P450 71B17 (502 aa).

A helical transmembrane segment spans residues 1–21 (MAISLLCLFLITFVSLTIVGC). Cysteine 444 lines the heme pocket.

This sequence belongs to the cytochrome P450 family. Heme serves as cofactor.

It is found in the membrane. This Arabidopsis thaliana (Mouse-ear cress) protein is Cytochrome P450 71B17 (CYP71B17).